Consider the following 61-residue polypeptide: Ferredoxin-3 (61 aa).

2 consecutive 4Fe-4S ferredoxin-type domains span residues 2–31 (YKITIDTDKCTGDGECVDVCPVEVYELQDG) and 32–61 (KAVAVNEDECLGCESCVEVCEQDALTVEEN). [3Fe-4S] cluster is bound by residues cysteine 11 and cysteine 17. 4 residues coordinate [4Fe-4S] cluster: cysteine 21, cysteine 41, cysteine 44, and cysteine 47. Cysteine 51 serves as a coordination point for [3Fe-4S] cluster.

It depends on [3Fe-4S] cluster as a cofactor. Requires [4Fe-4S] cluster as cofactor.

Its function is as follows. Ferredoxins are iron-sulfur proteins that transfer electrons in a wide variety of metabolic reactions. The protein is Ferredoxin-3 of Desulfocurvibacter africanus (Desulfovibrio africanus).